The sequence spans 450 residues: Sorting nexin-4 (450 aa).

Residue M1 is modified to N-acetylmethionine. The interval 1–46 (MEQAPPDPERQLQPAPLEPLGSPDAGLGAAVGKEAEGAGEESSGVD) is disordered. A Phosphoserine modification is found at S22. In terms of domain architecture, PX spans 61–187 (SVSEAEKRTG…YLFLTQEGNW (127 aa)). Residues R106, S108, K132, and R154 each contribute to the a 1,2-diacyl-sn-glycero-3-phospho-(1D-myo-inositol-3-phosphate) site.

This sequence belongs to the sorting nexin family. As to quaternary structure, heterodimer; heterodimerizes with SNX7 or SNX30. Interacts with WWC1/KIBRA. Identified in a complex with WWC1/KIBRA and dynein components DYNLL1 and DYNC1I2. Interacts with BIN1.

The protein localises to the early endosome membrane. Its function is as follows. Involved in the regulation of endocytosis and in several stages of intracellular trafficking. Plays a role in recycling endocytosed transferrin receptor and prevent its degradation. Involved in autophagosome assembly by regulating trafficking and recycling of phospholipid scramblase ATG9A. The sequence is that of Sorting nexin-4 from Homo sapiens (Human).